The sequence spans 217 residues: Probable lipoprotein CPn_0875/CP_0994/CPj0875/CpB0904 (217 aa).

The signal sequence occupies residues 1–21 (MKRVIYKTIFCGLTLLTSLSS). Cys22 carries N-palmitoyl cysteine lipidation. Residue Cys22 is the site of S-diacylglycerol cysteine attachment.

It belongs to the chlamydial CPn_0875/CT_734/TC_0107 family.

The protein localises to the cell membrane. The chain is Probable lipoprotein CPn_0875/CP_0994/CPj0875/CpB0904 from Chlamydia pneumoniae (Chlamydophila pneumoniae).